Here is a 481-residue protein sequence, read N- to C-terminus: MDAMATTEKKPHVIFIPFPAQSHIKAMLKLAQLLHHKGLQITFVNTDFIHNQFLESSGPHCLDGAPGFRFETIPDGVSHSPEASIPIRESLLRSIETNFLDRFIDLVTKLPDPPTCIISDGFLSVFTIDAAKKLGIPVMMYWTLAACGFMGFYHIHSLIEKGFAPLKDASYLTNGYLDTVIDWVPGMEGIRLKDFPLDWSTDLNDKVLMFTTEAPQRSHKVSHHIFHTFDELEPSIIKTLSLRYNHIYTIGPLQLLLDQIPEEKKQTGITSLHGYSLVKEEPECFQWLQSKEPNSVVYVNFGSTTVMSLEDMTEFGWGLANSNHYFLWIIRSNLVIGENAVLPPELEEHIKKRGFIASWCSQEKVLKHPSVGGFLTHCGWGSTIESLSAGVPMICWPYSWDQLTNCRYICKEWEVGLEMGTKVKRDEVKRLVQELMGEGGHKMRNKAKDWKEKARIAIAPNGSSSLNIDKMVKEITVLARN.

His23 functions as the Proton acceptor in the catalytic mechanism. His23 is a binding site for an anthocyanidin. The active-site Charge relay is Asp120. Positions 143, 362, 377, 380, 382, 385, 401, and 402 each coordinate UDP-alpha-D-glucose.

This sequence belongs to the UDP-glycosyltransferase family.

It catalyses the reaction steviol + UDP-alpha-D-glucose = steviolmonoside + UDP + H(+). It carries out the reaction steviolmonoside + UDP-alpha-D-glucose = rubusoside + UDP. Involved in the biosynthesis of steviol glycosides in leaves. Converts steviol to the mono-glycoside steviolmonoside. Converts the mono-glycoside steviolmonoside to the bi-glycoside rubusoside. The protein is UDP-glycosyltransferase 85C2 of Stevia rebaudiana (Stevia).